The sequence spans 258 residues: Peptidase inhibitor 15 (258 aa).

Positions 1–19 are cleaved as a signal peptide; that stretch reads MIAISAVSSALLFSLLCEA. Residues 20-60 constitute a propeptide that is removed on maturation; the sequence is STVVLLNSTDSSPPTNNFTDIEAALKAQLDSADIPKARRKR. Asparagine 26, asparagine 36, and asparagine 124 each carry an N-linked (GlcNAc...) asparagine glycan. The 141-residue stretch at 71–211 folds into the SCP domain; that stretch reads LDYHNQVRGK…RRAVYLVCNY (141 aa).

The protein belongs to the CRISP family. Post-translationally, N-glycosylated. In terms of tissue distribution, weakly expressed. Expressed at low level in prostate, mammary gland, salivary gland and thyroid gland.

It localises to the secreted. Functionally, serine protease inhibitor which displays weak inhibitory activity against trypsin. May play a role in facial patterning during embryonic development. The chain is Peptidase inhibitor 15 (PI15) from Homo sapiens (Human).